The primary structure comprises 85 residues: Large ribosomal subunit protein bL27 (85 aa).

Residues 1–23 (MAHKKGQGSTQNNRDSAGRRLGV) are disordered.

Belongs to the bacterial ribosomal protein bL27 family.

This chain is Large ribosomal subunit protein bL27, found in Aliarcobacter butzleri (strain RM4018) (Arcobacter butzleri).